The chain runs to 193 residues: Inosine triphosphate pyrophosphatase (193 aa).

Position 10 to 15 (10 to 15 (TGNANK)) interacts with ITP. Glu42 contacts Mg(2+). Residues Lys54, 70-71 (DT), Lys87, 146-149 (FGWD), Lys169, and 174-175 (HR) each bind ITP.

The protein belongs to the HAM1 NTPase family. Homodimer. The cofactor is Mg(2+). Mn(2+) serves as cofactor.

The protein localises to the cytoplasm. It is found in the nucleus. The catalysed reaction is ITP + H2O = IMP + diphosphate + H(+). The enzyme catalyses dITP + H2O = dIMP + diphosphate + H(+). It carries out the reaction XTP + H2O = XMP + diphosphate + H(+). Pyrophosphatase that hydrolyzes non-canonical purine nucleotides such as inosine triphosphate (ITP), deoxyinosine triphosphate (dITP) or xanthosine 5'-triphosphate (XTP) to their respective monophosphate derivatives. The enzyme does not distinguish between the deoxy- and ribose forms. Probably excludes non-canonical purines from RNA and DNA precursor pools, thus preventing their incorporation into RNA and DNA and avoiding chromosomal lesions. The sequence is that of Inosine triphosphate pyrophosphatase from Mycosarcoma maydis (Corn smut fungus).